Here is a 161-residue protein sequence, read N- to C-terminus: Nucleotide-binding protein Bcep18194_A5887 (161 aa).

This sequence belongs to the YajQ family.

Functionally, nucleotide-binding protein. The sequence is that of Nucleotide-binding protein Bcep18194_A5887 from Burkholderia lata (strain ATCC 17760 / DSM 23089 / LMG 22485 / NCIMB 9086 / R18194 / 383).